The primary structure comprises 154 residues: Large ribosomal subunit protein uL13 (154 aa).

The protein belongs to the universal ribosomal protein uL13 family. Part of the 50S ribosomal subunit.

Its function is as follows. This protein is one of the early assembly proteins of the 50S ribosomal subunit, although it is not seen to bind rRNA by itself. It is important during the early stages of 50S assembly. The chain is Large ribosomal subunit protein uL13 from Rhizobium rhizogenes (strain K84 / ATCC BAA-868) (Agrobacterium radiobacter).